The chain runs to 225 residues: MMQVRMQAEPQQLTLALSKGRIFEETLPLLEAAGIKVTEDPETSRKLILQTSDANVRVIIVRASDVPTYVQYGAADFGVAGKDVLLEHGGEGLYQPIDLHIAKCRMSVAVKDGFDYASAVQQGARLRVVTKYVQTAREHFAAKGVHVDLIKLYGSMELGPLVGLADAIVDLVSTGSTLRANQLVEVEHIMEISSRLVVNKAALKLKRERLQPILEAFEKASKRSS.

It belongs to the ATP phosphoribosyltransferase family. Short subfamily. Heteromultimer composed of HisG and HisZ subunits.

It localises to the cytoplasm. It catalyses the reaction 1-(5-phospho-beta-D-ribosyl)-ATP + diphosphate = 5-phospho-alpha-D-ribose 1-diphosphate + ATP. It participates in amino-acid biosynthesis; L-histidine biosynthesis; L-histidine from 5-phospho-alpha-D-ribose 1-diphosphate: step 1/9. Functionally, catalyzes the condensation of ATP and 5-phosphoribose 1-diphosphate to form N'-(5'-phosphoribosyl)-ATP (PR-ATP). Has a crucial role in the pathway because the rate of histidine biosynthesis seems to be controlled primarily by regulation of HisG enzymatic activity. The chain is ATP phosphoribosyltransferase from Herminiimonas arsenicoxydans.